Here is a 146-residue protein sequence, read N- to C-terminus: Cyanate hydratase (146 aa).

Residues Arg87, Glu90, and Ser113 contribute to the active site.

This sequence belongs to the cyanase family.

It carries out the reaction cyanate + hydrogencarbonate + 3 H(+) = NH4(+) + 2 CO2. Functionally, catalyzes the reaction of cyanate with bicarbonate to produce ammonia and carbon dioxide. This Nostoc sp. (strain PCC 7120 / SAG 25.82 / UTEX 2576) protein is Cyanate hydratase.